The sequence spans 815 residues: Serotype-specific mannosyltransferase WbdA (815 aa).

The alpha-(1-&gt;2)-mannosyltransferase stretch occupies residues 1–374 (MSRAIIENAG…WANTAHLAIE (374 aa)). Residues 431-804 (KLLVDISVLA…WKQSAEFLLK (374 aa)) form an alpha-(1-&gt;3)-mannosyltransferase region.

It belongs to the glycosyltransferase group 1 family. Glycosyltransferase 4 subfamily. As to quaternary structure, monomer. Interacts with the C-terminal region of WbdD.

The protein localises to the cell inner membrane. It catalyses the reaction [alpha-D-Man-(1-&gt;3)-alpha-D-Man-(1-&gt;3)-alpha-D-Man-(1-&gt;2)-alpha-D-Man-(1-&gt;2)](n)-alpha-D-Man-(1-&gt;3)-alpha-D-Man-(1-&gt;3)-alpha-D-Man-(1-&gt;3)-alpha-D-GlcNAc-di-trans,octa-cis-undecaprenyl diphosphate + 2 GDP-alpha-D-mannose = alpha-D-Man-(1-&gt;2)-alpha-D-Man-(1-&gt;2)-[alpha-D-Man-(1-&gt;3)-alpha-D-Man-(1-&gt;3)-alpha-D-Man-(1-&gt;2)-alpha-D-Man-(1-&gt;2)](n)-alpha-D-Man-(1-&gt;3)-alpha-D-Man-(1-&gt;3)-alpha-D-Man-(1-&gt;3)-alpha-D-GlcNAc-di-trans,octa-cis-undecaprenyl diphosphate + 2 GDP + 2 H(+). The enzyme catalyses alpha-D-Man-(1-&gt;2)-alpha-D-Man-(1-&gt;2)-[alpha-D-Man-(1-&gt;3)-alpha-D-Man-(1-&gt;3)-alpha-D-Man-(1-&gt;2)-alpha-D-Man-(1-&gt;2)](n)-alpha-D-Man-(1-&gt;3)-alpha-D-Man-(1-&gt;3)-alpha-D-Man-(1-&gt;3)-alpha-D-GlcNAc-di-trans,octa-cis-undecaprenyl diphosphate + 2 GDP-alpha-D-mannose = [alpha-D-Man-(1-&gt;3)-alpha-D-Man-(1-&gt;3)-alpha-D-Man-(1-&gt;2)-alpha-D-Man-(1-&gt;2)](n+1)-alpha-D-Man-(1-&gt;3)-alpha-D-Man-(1-&gt;3)-alpha-D-Man-(1-&gt;3)-alpha-D-GlcNAc-di-trans,octa-cis-undecaprenyl diphosphate + 2 GDP + 2 H(+). The protein operates within bacterial outer membrane biogenesis; LPS O-antigen biosynthesis. Functionally, mannosyltransferase involved in the biosynthesis of the repeat unit of the lipopolysaccharide (LPS) O-antigen region. Catalyzes the polymerization of a tetrasaccharide repeat unit containing two alpha-(1-&gt;3)- and two alpha-(1-&gt;2)-linked mannopyranose residues. This chain is Serotype-specific mannosyltransferase WbdA, found in Escherichia coli.